Consider the following 488-residue polypeptide: R3H and coiled-coil domain-containing protein 1 (488 aa).

Residues 16-81 (NDFVHRVQEE…KRRTVICHLD (66 aa)) form the R3H domain. 2 disordered regions span residues 87–180 (SDGP…GDAE) and 195–322 (KSPD…DADH). Residues 114–125 (GAAAGPRGAPAG) show a composition bias toward low complexity. Position 232 is a phosphoserine (Ser232). The stretch at 244–321 (SHGMRSLVDQ…EEDEDEADAD (78 aa)) forms a coiled coil. Positions 252–265 (DQEEEEIEGEEEEK) are enriched in acidic residues. Basic and acidic residues-rich tracts occupy residues 266–280 (VDEK…KERV) and 287–301 (TDAQ…GERM). Acidic residues predominate over residues 302–319 (DEGEDKVDAEEEDEDEAD).

In Mus musculus (Mouse), this protein is R3H and coiled-coil domain-containing protein 1.